Here is a 277-residue protein sequence, read N- to C-terminus: 3-methyl-2-oxobutanoate hydroxymethyltransferase (277 aa).

The Mg(2+) site is built by D43 and D82. Residues 43–44, D82, and K112 contribute to the 3-methyl-2-oxobutanoate site; that span reads DS. Residue E114 coordinates Mg(2+). E181 functions as the Proton acceptor in the catalytic mechanism.

This sequence belongs to the PanB family. Homodecamer; pentamer of dimers. The cofactor is Mg(2+).

The protein localises to the cytoplasm. It catalyses the reaction 3-methyl-2-oxobutanoate + (6R)-5,10-methylene-5,6,7,8-tetrahydrofolate + H2O = 2-dehydropantoate + (6S)-5,6,7,8-tetrahydrofolate. Its pathway is cofactor biosynthesis; (R)-pantothenate biosynthesis; (R)-pantoate from 3-methyl-2-oxobutanoate: step 1/2. Catalyzes the reversible reaction in which hydroxymethyl group from 5,10-methylenetetrahydrofolate is transferred onto alpha-ketoisovalerate to form ketopantoate. This is 3-methyl-2-oxobutanoate hydroxymethyltransferase from Listeria monocytogenes serotype 4b (strain CLIP80459).